The primary structure comprises 629 residues: 5-aminolevulinate synthase, mitochondrial (629 aa).

The N-terminal 69 residues, 1–69 (MDSVLRQSKA…VQSARTGGRA (69 aa)), are a transit peptide targeting the mitochondrion. Arginine 155, serine 268, and lysine 287 together coordinate substrate. 3 residues coordinate pyridoxal 5'-phosphate: serine 320, histidine 348, and threonine 388. The active site involves lysine 391. Lysine 391 carries the post-translational modification N6-(pyridoxal phosphate)lysine. Residues threonine 420 and threonine 421 each contribute to the pyridoxal 5'-phosphate site. Residue threonine 506 participates in substrate binding.

It belongs to the class-II pyridoxal-phosphate-dependent aminotransferase family. As to quaternary structure, homodimer. Requires pyridoxal 5'-phosphate as cofactor.

Its subcellular location is the mitochondrion matrix. It catalyses the reaction succinyl-CoA + glycine + H(+) = 5-aminolevulinate + CO2 + CoA. It functions in the pathway porphyrin-containing compound metabolism; protoporphyrin-IX biosynthesis; 5-aminolevulinate from glycine: step 1/1. Catalyzes the synthesis of 5-aminolevulinate (ALA) from succinyl-CoA and glycine, the first and rate-limiting step in heme biosynthesis. The chain is 5-aminolevulinate synthase, mitochondrial (alv-1) from Neurospora crassa (strain ATCC 24698 / 74-OR23-1A / CBS 708.71 / DSM 1257 / FGSC 987).